A 160-amino-acid chain; its full sequence is Probable NADH dehydrogenase [ubiquinone] 1 beta subcomplex subunit 2, mitochondrial (160 aa).

It belongs to the complex I NDUFB2 subunit family. In terms of assembly, complex I is composed of 45 different subunits.

Its subcellular location is the mitochondrion inner membrane. Accessory subunit of the mitochondrial membrane respiratory chain NADH dehydrogenase (Complex I), that is believed not to be involved in catalysis. Complex I functions in the transfer of electrons from NADH to the respiratory chain. The immediate electron acceptor for the enzyme is believed to be ubiquinone. The protein is Probable NADH dehydrogenase [ubiquinone] 1 beta subcomplex subunit 2, mitochondrial of Caenorhabditis elegans.